The sequence spans 245 residues: 1-(5-phosphoribosyl)-5-[(5-phosphoribosylamino)methylideneamino] imidazole-4-carboxamide isomerase (245 aa).

Catalysis depends on Asp-7, which acts as the Proton acceptor. Residue Asp-129 is the Proton donor of the active site.

Belongs to the HisA/HisF family.

It is found in the cytoplasm. The enzyme catalyses 1-(5-phospho-beta-D-ribosyl)-5-[(5-phospho-beta-D-ribosylamino)methylideneamino]imidazole-4-carboxamide = 5-[(5-phospho-1-deoxy-D-ribulos-1-ylimino)methylamino]-1-(5-phospho-beta-D-ribosyl)imidazole-4-carboxamide. It functions in the pathway amino-acid biosynthesis; L-histidine biosynthesis; L-histidine from 5-phospho-alpha-D-ribose 1-diphosphate: step 4/9. The protein is 1-(5-phosphoribosyl)-5-[(5-phosphoribosylamino)methylideneamino] imidazole-4-carboxamide isomerase of Serratia proteamaculans (strain 568).